The chain runs to 230 residues: UPF0173 metal-dependent hydrolase Rsph17029_0942 (230 aa).

This sequence belongs to the UPF0173 family.

This is UPF0173 metal-dependent hydrolase Rsph17029_0942 from Cereibacter sphaeroides (strain ATCC 17029 / ATH 2.4.9) (Rhodobacter sphaeroides).